The sequence spans 305 residues: Protein FdhE homolog (305 aa).

It belongs to the FdhE family.

The protein localises to the cytoplasm. Functionally, necessary for formate dehydrogenase activity. This is Protein FdhE homolog from Stutzerimonas stutzeri (strain A1501) (Pseudomonas stutzeri).